The chain runs to 91 residues: Hepcidin-2 (91 aa).

The first 24 residues, 1–24 (MKLSNVFLAAVVILTCVCVFQITA), serve as a signal peptide directing secretion. Residues 25-64 (VPFIQQVQDEHHVESEELQENQHLTEAEHRLTDPLVLFRT) constitute a propeptide that is removed on maturation. 4 disulfides stabilise this stretch: Cys-73–Cys-89, Cys-76–Cys-79, Cys-77–Cys-85, and Cys-80–Cys-88.

Belongs to the hepcidin family.

It is found in the secreted. In terms of biological role, seems to act as a signaling molecule involved in the maintenance of iron homeostasis. Seems to be required in conjunction with HFE to regulate both intestinal iron absorption and iron storage in macrophages. May also have antimicrobial activity. This is Hepcidin-2 (hamp2) from Danio rerio (Zebrafish).